Consider the following 886-residue polypeptide: Alanine--tRNA ligase (886 aa).

Positions 564, 568, 676, and 680 each coordinate Zn(2+).

Belongs to the class-II aminoacyl-tRNA synthetase family. The cofactor is Zn(2+).

The protein resides in the cytoplasm. The catalysed reaction is tRNA(Ala) + L-alanine + ATP = L-alanyl-tRNA(Ala) + AMP + diphosphate. Catalyzes the attachment of alanine to tRNA(Ala) in a two-step reaction: alanine is first activated by ATP to form Ala-AMP and then transferred to the acceptor end of tRNA(Ala). Also edits incorrectly charged Ser-tRNA(Ala) and Gly-tRNA(Ala) via its editing domain. In Bartonella bacilliformis (strain ATCC 35685 / KC583 / Herrer 020/F12,63), this protein is Alanine--tRNA ligase.